A 428-amino-acid polypeptide reads, in one-letter code: Phosphomethylpyrimidine synthase 2 (428 aa).

Substrate-binding positions include M94, Y123, H162, 184–186, 225–228, and E264; these read SRG and NGMR. H268 serves as a coordination point for Zn(2+). Substrate is bound at residue Y291. H332 provides a ligand contact to Zn(2+). C408, C411, and C415 together coordinate [4Fe-4S] cluster.

The protein belongs to the ThiC family. The cofactor is [4Fe-4S] cluster.

The enzyme catalyses 5-amino-1-(5-phospho-beta-D-ribosyl)imidazole + S-adenosyl-L-methionine = 4-amino-2-methyl-5-(phosphooxymethyl)pyrimidine + CO + 5'-deoxyadenosine + formate + L-methionine + 3 H(+). It participates in cofactor biosynthesis; thiamine diphosphate biosynthesis. In terms of biological role, catalyzes the synthesis of the hydroxymethylpyrimidine phosphate (HMP-P) moiety of thiamine from aminoimidazole ribotide (AIR) in a radical S-adenosyl-L-methionine (SAM)-dependent reaction. This Methanosarcina mazei (strain ATCC BAA-159 / DSM 3647 / Goe1 / Go1 / JCM 11833 / OCM 88) (Methanosarcina frisia) protein is Phosphomethylpyrimidine synthase 2.